A 255-amino-acid polypeptide reads, in one-letter code: Antigen LPMC-61 (255 aa).

Tandem repeats lie at residues 18 to 48, 49 to 57, 58 to 65, 66 to 78, 79 to 90, 91 to 103, 104 to 140, 141 to 152, 153 to 164, 165 to 172, 173 to 192, and 193 to 210. The tract at residues 18-90 is disordered; the sequence is WPERQQQQQP…QQQPQMQQEQ (73 aa). The 12 X approximate tandem repeats, Gln-rich stretch occupies residues 18-210; the sequence is WPERQQQQQP…QQQQQQQQQQ (193 aa). Low complexity predominate over residues 149–210; sequence QQQQWPEQPE…QQQQQQQQQQ (62 aa). The segment at 149-224 is disordered; sequence QQQQWPEQPE…DGVGIVVPYL (76 aa).

As to quaternary structure, may be covalently linked by disulfide bonds to other polypeptides to form the 80 kDa antigen.

In terms of biological role, unknown. The Gln-rich tandem repeats may be important for an unknown aspect of the parasitic life cycle. May be an important immunogen. The polypeptide is Antigen LPMC-61 (Eimeria tenella (Coccidian parasite)).